Reading from the N-terminus, the 1446-residue chain is ABC-type transporter oblD (1446 aa).

N-linked (GlcNAc...) asparagine glycans are attached at residues N9, N28, N222, N281, and N305. The ABC transporter 1 domain occupies 104-357 (LEVLSLVSKA…FLDMGFVCPD (254 aa)). 6 helical membrane passes run 468–488 (VTIS…SIFY), 502–522 (ALLF…MLTL), 548–568 (MIMD…VLYF), 577–597 (GAFF…SMFF), 610–630 (ALPF…FTIP), and 719–739 (IGVI…ATDF). An ABC transporter 2 domain is found at 796-1038 (FQWKDVCFDI…ILIDYFVRNG (243 aa)). ATP is bound at residue 832 to 839 (GVSGAGKT). A run of 5 helical transmembrane segments spans residues 1147–1167 (ALCV…PNTI), 1177–1197 (IFML…HFVA), 1217–1237 (FIIS…VLMF), 1265–1285 (LMVW…IAAF), and 1301–1321 (LCLI…FWIF). N-linked (GlcNAc...) asparagine glycosylation is found at N1344 and N1359. The chain crosses the membrane as a helical span at residues 1412-1432 (FGLMWVFIVFNIFAACLLYWW).

It belongs to the ABC transporter superfamily. ABCG family. PDR (TC 3.A.1.205) subfamily.

It is found in the cell membrane. ABC-type transporter; part of the gene cluster that mediates the biosynthesis of the sesterterpenes ophiobolins, fungal phytotoxins with potential anti-cancer activities. Acts as a specific transporter involved in ophiobolins secretion. This is ABC-type transporter oblD from Aspergillus clavatus (strain ATCC 1007 / CBS 513.65 / DSM 816 / NCTC 3887 / NRRL 1 / QM 1276 / 107).